The following is a 119-amino-acid chain: Large ribosomal subunit protein bL20 (119 aa).

It belongs to the bacterial ribosomal protein bL20 family.

Its function is as follows. Binds directly to 23S ribosomal RNA and is necessary for the in vitro assembly process of the 50S ribosomal subunit. It is not involved in the protein synthesizing functions of that subunit. The sequence is that of Large ribosomal subunit protein bL20 from Acidovorax ebreus (strain TPSY) (Diaphorobacter sp. (strain TPSY)).